Consider the following 161-residue polypeptide: MPTDLHPDLAALAPLLGTWTGRGSGKYPTIQPFDYLEEVTFSHVGKPFLAYAQKTRAAADGKPLHAETGYLRVPQPGRLELVLAHPSGITEIEVGSYAVTGGLIEMRMSTTSIGLTPTAKEVTALGRWFRIDGDKLSYSVQMGAVGQPLQDHLAAVLHRQR.

The GXWXGXG signature appears at 17–23 (GTWTGRG). Residue H152 participates in heme b binding.

Belongs to the nitrobindin family. In terms of assembly, homodimer. Heme b is required as a cofactor.

The enzyme catalyses peroxynitrite = nitrate. The protein operates within nitrogen metabolism. Functionally, heme-binding protein able to scavenge peroxynitrite and to protect free L-tyrosine against peroxynitrite-mediated nitration, by acting as a peroxynitrite isomerase that converts peroxynitrite to nitrate. Therefore, this protein likely plays a role in peroxynitrite sensing and in the detoxification of reactive nitrogen and oxygen species (RNS and ROS, respectively). Is able to bind nitric oxide (NO) in vitro, but may act as a sensor of peroxynitrite levels in vivo. This Mycobacterium avium (strain 104) protein is Peroxynitrite isomerase 2.